Consider the following 498-residue polypeptide: Glycerol kinase (498 aa).

Threonine 12 provides a ligand contact to ADP. ATP is bound by residues threonine 12, threonine 13, and serine 14. Sn-glycerol 3-phosphate is bound at residue threonine 12. Arginine 16 serves as a coordination point for ADP. Sn-glycerol 3-phosphate is bound by residues arginine 82, tyrosine 134, and aspartate 243. Residues arginine 82, tyrosine 134, aspartate 243, and glutamine 244 each coordinate glycerol. 2 residues coordinate ADP: threonine 265 and glycine 308. Positions 265, 308, 312, and 411 each coordinate ATP. Residue glycine 411 coordinates ADP.

It belongs to the FGGY kinase family.

It carries out the reaction glycerol + ATP = sn-glycerol 3-phosphate + ADP + H(+). Its pathway is polyol metabolism; glycerol degradation via glycerol kinase pathway; sn-glycerol 3-phosphate from glycerol: step 1/1. Inhibited by fructose 1,6-bisphosphate (FBP). Functionally, key enzyme in the regulation of glycerol uptake and metabolism. Catalyzes the phosphorylation of glycerol to yield sn-glycerol 3-phosphate. The polypeptide is Glycerol kinase (Brucella suis (strain ATCC 23445 / NCTC 10510)).